The following is a 443-amino-acid chain: MSEMTPREIVSELNKHIIGQDNAKRSVAIALRNRWRRMQLDEELRHEVTPKNILMIGPTGVGKTEIARRLAKLANAPFIKVEATKFTEVGYVGKEVDSIIRDLTDAAVKMVRVQAIEKNRYRAEELAEERILDVLVPPAKNNWGQTEQQQEPSAARQTFRKKLREGQLDDKEIEINLAAAPMGVEIMAPPGMEEMTSQLQSLFQNLGGQKQKPRKLKIKDAMKLLVEEEAAKLVNPEELKQDAIDAVEQHGIVFIDEIDKICKRGETSGPDVSREGVQRDLLPLVEGCTVSTKHGMVKTDHILFIASGAFQVAKPSDLIPELQGRLPIRVELQALTTSDFERILTEPNASVTVQYKALMATEGVNIEFTDSGIKRIAEAAWQVNETTENIGARRLHTVLERLMEEISYNASDLHGQNITIDAEYVSKHLDALVADEDLSRFIL.

Residues Ile18, 60–65 (GVGKTE), Asp256, Glu321, and Arg393 contribute to the ATP site.

This sequence belongs to the ClpX chaperone family. HslU subfamily. A double ring-shaped homohexamer of HslV is capped on each side by a ring-shaped HslU homohexamer. The assembly of the HslU/HslV complex is dependent on binding of ATP.

The protein resides in the cytoplasm. ATPase subunit of a proteasome-like degradation complex; this subunit has chaperone activity. The binding of ATP and its subsequent hydrolysis by HslU are essential for unfolding of protein substrates subsequently hydrolyzed by HslV. HslU recognizes the N-terminal part of its protein substrates and unfolds these before they are guided to HslV for hydrolysis. In Salmonella arizonae (strain ATCC BAA-731 / CDC346-86 / RSK2980), this protein is ATP-dependent protease ATPase subunit HslU.